The sequence spans 132 residues: DNA-directed RNA polymerase subunit omega (132 aa).

Residues 100 to 119 (VSAEEEASHGTAGMSAEELE) form a disordered region.

This sequence belongs to the RNA polymerase subunit omega family. In terms of assembly, the RNAP catalytic core consists of 2 alpha, 1 beta, 1 beta' and 1 omega subunit. When a sigma factor is associated with the core the holoenzyme is formed, which can initiate transcription.

It catalyses the reaction RNA(n) + a ribonucleoside 5'-triphosphate = RNA(n+1) + diphosphate. Functionally, promotes RNA polymerase assembly. Latches the N- and C-terminal regions of the beta' subunit thereby facilitating its interaction with the beta and alpha subunits. In Gluconacetobacter diazotrophicus (strain ATCC 49037 / DSM 5601 / CCUG 37298 / CIP 103539 / LMG 7603 / PAl5), this protein is DNA-directed RNA polymerase subunit omega.